We begin with the raw amino-acid sequence, 267 residues long: Phosphate import ATP-binding protein PstB 2 (267 aa).

The 242-residue stretch at 21 to 262 (LSTKDVHVYY…AKLQSTNDYV (242 aa)) folds into the ABC transporter domain. 53 to 60 (GPSGSGKS) contacts ATP.

Belongs to the ABC transporter superfamily. Phosphate importer (TC 3.A.1.7) family. The complex is composed of two ATP-binding proteins (PstB), two transmembrane proteins (PstC and PstA) and a solute-binding protein (PstS).

Its subcellular location is the cell membrane. The enzyme catalyses phosphate(out) + ATP + H2O = ADP + 2 phosphate(in) + H(+). Functionally, part of the ABC transporter complex PstSACB involved in phosphate import. Responsible for energy coupling to the transport system. In Streptococcus pneumoniae (strain ATCC BAA-255 / R6), this protein is Phosphate import ATP-binding protein PstB 2.